We begin with the raw amino-acid sequence, 263 residues long: Small ribosomal subunit protein eS4, Y isoform 1 (263 aa).

Positions Leu42–Asp104 constitute an S4 RNA-binding domain.

This sequence belongs to the eukaryotic ribosomal protein eS4 family.

The protein is Small ribosomal subunit protein eS4, Y isoform 1 (RPS4Y1) of Macaca fuscata fuscata (Japanese macaque).